The sequence spans 467 residues: UTP--glucose-1-phosphate uridylyltransferase (467 aa).

UTP-binding positions include 83–86, lysine 97, glutamine 160, and glycine 189; that span reads LNGG. Position 85-86 (85-86) interacts with substrate; it reads GG. Substrate contacts are provided by residues histidine 190 and 218–220; that span reads NSD. Residues aspartate 220 and lysine 358 each contribute to the UTP site.

It belongs to the UDPGP type 1 family.

It is found in the cytoplasm. It carries out the reaction alpha-D-glucose 1-phosphate + UTP + H(+) = UDP-alpha-D-glucose + diphosphate. Its function is as follows. Plays a central role as a glucosyl donor in cellular metabolic pathways. This chain is UTP--glucose-1-phosphate uridylyltransferase (UGPA), found in Musa acuminata (Banana).